Reading from the N-terminus, the 395-residue chain is General transcription factor IIH subunit 2 (395 aa).

The VWFA domain maps to 60–236; that stretch reads HLYVVVDGSR…HYKELLTHHV (177 aa). Tyrosine 95 bears the Phosphotyrosine mark. The C4-type zinc finger occupies 291-308; that stretch reads CPQCRAKYCELPVECKIC.

It belongs to the GTF2H2 family. As to quaternary structure, component of the TFIID-containing RNA polymerase II pre-initiation complex that is composed of TBP and at least GTF2A1, GTF2A2, GTF2E1, GTF2E2, GTF2F1, GTF2H2, GTF2H3, GTF2H4, GTF2H5, GTF2B, TCEA1, ERCC2 and ERCC3. Component of the 7-subunit TFIIH core complex composed of XPB/ERCC3, XPD/ERCC2, GTF2H1, GTF2H2, GTF2H3, GTF2H4 and GTF2H5, which is active in NER. The core complex associates with the 3-subunit CDK-activating kinase (CAK) module composed of CCNH/cyclin H, CDK7 and MNAT1 to form the 10-subunit holoenzyme (holo-TFIIH) active in transcription. Interacts with XPB, XPD, GTF2H1 and GTF2H3. In terms of assembly, (Microbial infection) Interacts with varicella-zoster virus IE63 protein. In terms of tissue distribution, widely expressed, with higher expression in skeletal muscle.

It is found in the nucleus. Component of the general transcription and DNA repair factor IIH (TFIIH) core complex, which is involved in general and transcription-coupled nucleotide excision repair (NER) of damaged DNA and, when complexed to CAK, in RNA transcription by RNA polymerase II. In NER, TFIIH acts by opening DNA around the lesion to allow the excision of the damaged oligonucleotide and its replacement by a new DNA fragment. In transcription, TFIIH has an essential role in transcription initiation. When the pre-initiation complex (PIC) has been established, TFIIH is required for promoter opening and promoter escape. Phosphorylation of the C-terminal tail (CTD) of the largest subunit of RNA polymerase II by the kinase module CAK controls the initiation of transcription. The N-terminus of GTF2H2 interacts with and regulates XPD whereas an intact C-terminus is required for a successful escape of RNAP II form the promoter. This is General transcription factor IIH subunit 2 (GTF2H2) from Homo sapiens (Human).